The primary structure comprises 386 residues: Patatin-16 (386 aa).

Residues 1-23 (MATTKSFLILIVMILATTSSTFA) form the signal peptide. The region spanning 32–229 (LSIDGGGIKG…TVADPALLSV (198 aa)) is the PNPLA domain. The GXGXXG motif lies at 36-41 (GGGIKG). Positions 75 to 79 (GTSTG) match the GXSXG motif. The Nucleophile role is filled by Ser77. Residue Asn115 is glycosylated (N-linked (GlcNAc...) asparagine). Residue Asp215 is the Proton acceptor of the active site. The short motif at 215-217 (DGA) is the DGA/G element. Residues 360–384 (ETYEEALKRFAKLLSDRKKLRANKA) adopt a coiled-coil conformation.

The protein belongs to the patatin family.

It is found in the vacuole. In terms of biological role, probable lipolytic acyl hydrolase (LAH), an activity which is thought to be involved in the response of tubers to pathogens. This chain is Patatin-16, found in Solanum tuberosum (Potato).